Here is a 539-residue protein sequence, read N- to C-terminus: MSKLIEYDETARRAMEAGVDKLAETVRVTLGPRGRHVVLAKSFGGPTVTNDGVTVARDIDLEDPFENLGAQLVKSVATKTNDVAGDGTTTATVLARALVKTGLRLVAAGINPIALGSGIGKAADAVSEALLASATPVSGKDAIAQVATVSSRDQLIGDLVGEAMSKVGHDGVVSVEESSTLGTELEFTEGVGFDKGYLSAYFVTDFDAQQAVLEDPLILLHQDKISSLPDLLPLLEKVAESGKPLMIIAEDIEGEALATLVVNSIRKTLKAIAVKSPYFGDRRKAFLQDLAAVTGAEVVNPDAGLVLREVGLEVMGSARRVVVSKDDTIIVDGGGAPEAVEARVNLLRSEIDRSDSEWDREKLGERLAKLAGGVAVIKVGAATETELKKRKESVEDAVAAAKAAVEEGIVAGGGSALIQARNALKDLRASLSGDEAVGVDVFSEALAAPLYWIATNAGLDGSVVVNKVSEVPAGHGLNAATLTYGDLAADGIVDPVKVTRSAVLNASSVARMVLTTETAIVDKPAEPEDDGHGHHGHAH.

ATP-binding positions include 29 to 32, 86 to 90, Gly-413, 478 to 480, and Asp-494; these read TLGP, DGTTT, and NAA. The tract at residues 520 to 539 is disordered; that stretch reads IVDKPAEPEDDGHGHHGHAH. A compositionally biased stretch (basic and acidic residues) spans 523 to 533; the sequence is KPAEPEDDGHG.

This sequence belongs to the chaperonin (HSP60) family. As to quaternary structure, forms a cylinder of 14 subunits composed of two heptameric rings stacked back-to-back. Interacts with the co-chaperonin GroES.

It is found in the cytoplasm. It catalyses the reaction ATP + H2O + a folded polypeptide = ADP + phosphate + an unfolded polypeptide.. Together with its co-chaperonin GroES, plays an essential role in assisting protein folding. The GroEL-GroES system forms a nano-cage that allows encapsulation of the non-native substrate proteins and provides a physical environment optimized to promote and accelerate protein folding. This is Chaperonin GroEL 1 from Mycobacterium ulcerans (strain Agy99).